The chain runs to 783 residues: Probable potassium transporter 2 (783 aa).

Over 1-21 the chain is Cytoplasmic; that stretch reads MDAEAGVGGADQLPWRQHYRN. Residues 22–42 form a helical membrane-spanning segment; that stretch reads LLLLAYQSFGVVYGDLSTSPL. Residues 43–61 are Extracellular-facing; that stretch reads YVYKSTFSGRLRRYQDEQT. The helical transmembrane segment at 62–82 threads the bilayer; it reads VFGVLSLIFWTFTLIPLLKYV. Residues 83–152 are Cytoplasmic-facing; sequence TIVLSADDNG…FMEKHKNART (70 aa). A helical transmembrane segment spans residues 153-173; the sequence is VLLLIVLCGASMMIGDGILTP. The Extracellular segment spans residues 174–189; it reads AISVLSSMSGLKVRAT. Residues 190–210 traverse the membrane as a helical segment; the sequence is GLHDRSVVLLSCIVLVGLFAL. The Cytoplasmic segment spans residues 211-217; that stretch reads QHRGTQK. Residues 218–238 traverse the membrane as a helical segment; that stretch reads VAFMFAPIVVIWLFCIGGIGL. Residues 239-268 lie on the Extracellular side of the membrane; the sequence is YNIIHWNPRIYQALSPYYIVKFFRTTGKDG. A helical transmembrane segment spans residues 269-289; sequence WIALGGILLSMTGCEAMFADL. The Cytoplasmic portion of the chain corresponds to 290–298; that stretch reads GHFTSASVR. Residues 299 to 319 traverse the membrane as a helical segment; it reads LAFITIIYPCLILQYMGQAAF. Residues 320–338 are Extracellular-facing; sequence LSKNILDMPTGFYDSIPGP. Residues 339-359 form a helical membrane-spanning segment; the sequence is IFWPVFVVATLAAVVGSQAVI. Residues 360–390 lie on the Cytoplasmic side of the membrane; that stretch reads SATFSIVKQCHSLGCFPRVKVVHTSRWIYGQ. Residues 391–411 form a helical membrane-spanning segment; it reads IYIPEINWILMVLCVAVTVAF. Over 412 to 422 the chain is Extracellular; the sequence is RDITLIGNAYG. Residues 423-443 traverse the membrane as a helical segment; the sequence is VACMTVMFVTTFLMALIMIFV. The Cytoplasmic portion of the chain corresponds to 444–447; sequence WQKN. The helical transmembrane segment at 448-468 threads the bilayer; the sequence is IIFALSFFLLFGSVEVVYLSS. The Extracellular segment spans residues 469–475; the sequence is SLMKVTQ. Residues 476-496 form a helical membrane-spanning segment; it reads GGWVPLVLALIFMSVMYIWHY. The Cytoplasmic segment spans residues 497 to 783; that stretch reads GTRKKYQYDL…LIEVGMAYQV (287 aa). The interval 662–691 is disordered; that stretch reads DLADSMTMRSTKSESLRSLQSSYEQESPNV. A compositionally biased stretch (polar residues) spans 677–691; it reads LRSLQSSYEQESPNV.

Belongs to the HAK/KUP transporter (TC 2.A.72.3) family.

Its subcellular location is the cell membrane. It catalyses the reaction K(+)(in) = K(+)(out). It carries out the reaction Na(+)(in) = Na(+)(out). Its function is as follows. High-affinity potassium transporter. Can transport sodium under high sodium and low potassium concentrations in the extracellular environment. The protein is Probable potassium transporter 2 (HAK2) of Oryza sativa subsp. japonica (Rice).